Consider the following 318-residue polypeptide: DNA repair nuclease/redox regulator APEX1 (318 aa).

The disordered stretch occupies residues Met-1–Ser-59. Positions Pro-2–Asn-33 are necessary for interaction with YBX1, binding to RNA, association together with NPM1 to rRNA, endoribonuclease activity on abasic RNA and localization in the nucleoli. 2 positions are modified to N6-acetyllysine; by EP300: Lys-6 and Lys-7. Residues Gly-8–Asp-13 carry the Nuclear localization signal (NLS) motif. Over residues Glu-16–Val-38 the composition is skewed to basic and acidic residues. The tract at residues Ala-23–Asn-33 is necessary for interaction with NPM1 and for efficient rRNA binding. N6-acetyllysine occurs at positions 27, 31, 32, and 35. At Ser-54 the chain carries Phosphoserine. A Nuclear export signal (NES) motif is present at residues Ile-64 to Gly-80. The residue at position 65 (Cys-65) is an S-nitrosocysteine; alternate. Cysteines 65 and 93 form a disulfide. Asp-70 is a Mg(2+) binding site. At Cys-93 the chain carries S-nitrosocysteine; alternate. A Mg(2+)-binding site is contributed by Glu-96. Tyr-171 is a catalytic residue. Lys-197 bears the N6-acetyllysine mark. Mg(2+)-binding residues include Asp-210 and Asn-212. Asp-210 (proton donor/acceptor) is an active-site residue. Thr-233 carries the phosphothreonine; by CDK5 modification. The mitochondrial targeting sequence (MTS) stretch occupies residues Gln-289–Leu-318. Asp-308 contributes to the Mg(2+) binding site. Cys-310 bears the S-nitrosocysteine mark.

It belongs to the DNA repair enzymes AP/ExoA family. In terms of assembly, monomer. Homodimer; disulfide-linked. Component of the SET complex, composed of at least APEX1, SET, ANP32A, HMGB2, NME1 and TREX1. Associates with the dimer XRCC5/XRCC6 in a DNA-dependent manner. Interacts with SIRT1; the interaction is increased in the context of genotoxic stress. Interacts with HDAC1, HDAC2 and HDAC3; the interactions are not dependent on the APEX1 acetylation status. Interacts with XRCC1; the interaction is induced by SIRT1 and increased with the APEX1 acetylated form. Interacts with NPM1 (via N-terminal domain); the interaction is RNA-dependent and decreases in hydrogen peroxide-damaged cells. Interacts (via N-terminus) with YBX1 (via C-terminus); the interaction is increased in presence of APEX1 acetylated at Lys-6 and Lys-7. Interacts with HNRNPL; the interaction is DNA-dependent. Interacts (via N-terminus) with KPNA1 and KPNA2. Interacts with TXN; the interaction stimulates the FOS/JUN AP-1 complex DNA-binding activity in a redox-dependent manner. Interacts with GZMA, KRT8, MDM2, POLB, PRDX6, PRPF19, RPLP0, TOMM20 and WDR77. Binds to CDK5. Requires Mg(2+) as cofactor. It depends on Mn(2+) as a cofactor. Post-translationally, phosphorylated. Phosphorylation by kinase PKC or casein kinase CK2 results in enhanced redox activity that stimulates binding of the FOS/JUN AP-1 complex to its cognate binding site. AP-endodeoxyribonuclease activity is not affected by CK2-mediated phosphorylation. Phosphorylation of Thr-233 by CDK5 in response to MPP(+)/MPTP (1-methyl-4-phenylpyridinium) reduces AP-endodeoxyribonuclease activity resulting in accumulation of DNA damage and contributing to neuronal death. In terms of processing, acetylated on Lys-6 and Lys-7. Acetylation is increased by the transcriptional coactivator EP300 acetyltransferase, genotoxic agents like H(2)O(2) and methyl methanesulfonate (MMS). Acetylation increases its binding affinity to the negative calcium response element (nCaRE) DNA promoter. The acetylated form induces a stronger binding of YBX1 to the Y-box sequence in the MDR1 promoter than the unacetylated form. Deacetylated on lysines. Lys-6 and Lys-7 are deacetylated by SIRT1. Cleaved at Lys-31 by granzyme A to create the mitochondrial form; leading in reduction of binding to DNA, AP endodeoxyribonuclease activity, redox activation of transcription factors and to enhanced cell death. Cleaved by granzyme K; leading to intracellular ROS accumulation and enhanced cell death after oxidative stress. Post-translationally, cys-69 and Cys-93 are nitrosylated in response to nitric oxide (NO) and lead to the exposure of the nuclear export signal (NES). In terms of processing, ubiquitinated by MDM2; leading to translocation to the cytoplasm and proteasomal degradation. In terms of tissue distribution, the mitochondrial form is expressed in liver (at protein level). Thymus.

It is found in the nucleus. The protein resides in the nucleolus. The protein localises to the nucleus speckle. It localises to the endoplasmic reticulum. Its subcellular location is the cytoplasm. It is found in the mitochondrion. The catalysed reaction is Exonucleolytic cleavage in the 3'- to 5'-direction to yield nucleoside 5'-phosphates.. NPM1 stimulates endodeoxyribonuclease activity on double-stranded DNA with AP sites, but inhibits endoribonuclease activity on single-stranded RNA containing AP sites. Its function is as follows. Multifunctional protein that plays a central role in the cellular response to oxidative stress. The two major activities of APEX1 are DNA repair and redox regulation of transcriptional factors. Functions as an apurinic/apyrimidinic (AP) endodeoxyribonuclease in the DNA base excision repair (BER) pathway of DNA lesions induced by oxidative and alkylating agents. Initiates repair of AP sites in DNA by catalyzing hydrolytic incision of the phosphodiester backbone immediately adjacent to the damage, generating a single-strand break with 5'-deoxyribose phosphate and 3'-hydroxyl ends. Also incises at AP sites in the DNA strand of DNA/RNA hybrids, single-stranded DNA regions of R-loop structures, and single-stranded RNA molecules. Has 3'-5' exoribonuclease activity on mismatched deoxyribonucleotides at the 3' termini of nicked or gapped DNA molecules during short-patch BER. Possesses DNA 3' phosphodiesterase activity capable of removing lesions (such as phosphoglycolate) blocking the 3' side of DNA strand breaks. May also play a role in the epigenetic regulation of gene expression by participating in DNA demethylation. Acts as a loading factor for POLB onto non-incised AP sites in DNA and stimulates the 5'-terminal deoxyribose 5'-phosphate (dRp) excision activity of POLB. Plays a role in the protection from granzyme-mediated cellular repair leading to cell death. Also involved in the DNA cleavage step of class switch recombination (CSR). On the other hand, APEX1 also exerts reversible nuclear redox activity to regulate DNA binding affinity and transcriptional activity of transcriptional factors by controlling the redox status of their DNA-binding domain, such as the FOS/JUN AP-1 complex after exposure to IR. Involved in calcium-dependent down-regulation of parathyroid hormone (PTH) expression by binding to negative calcium response elements (nCaREs). Together with HNRNPL or the dimer XRCC5/XRCC6, associates with nCaRE, acting as an activator of transcriptional repression. Stimulates the YBX1-mediated MDR1 promoter activity, when acetylated at Lys-6 and Lys-7, leading to drug resistance. Also acts as an endoribonuclease involved in the control of single-stranded RNA metabolism. Plays a role in regulating MYC mRNA turnover by preferentially cleaving in between UA and CA dinucleotides of the MYC coding region determinant (CRD). In association with NMD1, plays a role in the rRNA quality control process during cell cycle progression. Associates, together with YBX1, on the MDR1 promoter. Together with NPM1, associates with rRNA. Binds DNA and RNA. The chain is DNA repair nuclease/redox regulator APEX1 (APEX1) from Bos taurus (Bovine).